The chain runs to 427 residues: Glutamate-1-semialdehyde 2,1-aminomutase (427 aa).

An N6-(pyridoxal phosphate)lysine modification is found at lysine 265.

This sequence belongs to the class-III pyridoxal-phosphate-dependent aminotransferase family. HemL subfamily. Homodimer. The cofactor is pyridoxal 5'-phosphate.

The protein localises to the cytoplasm. It carries out the reaction (S)-4-amino-5-oxopentanoate = 5-aminolevulinate. The protein operates within porphyrin-containing compound metabolism; protoporphyrin-IX biosynthesis; 5-aminolevulinate from L-glutamyl-tRNA(Glu): step 2/2. The protein is Glutamate-1-semialdehyde 2,1-aminomutase of Burkholderia ambifaria (strain MC40-6).